A 359-amino-acid polypeptide reads, in one-letter code: 4-hydroxy-3-methylbut-2-en-1-yl diphosphate synthase (flavodoxin) (359 aa).

[4Fe-4S] cluster is bound by residues Cys265, Cys268, Cys300, and Glu307.

The protein belongs to the IspG family. The cofactor is [4Fe-4S] cluster.

The enzyme catalyses (2E)-4-hydroxy-3-methylbut-2-enyl diphosphate + oxidized [flavodoxin] + H2O + 2 H(+) = 2-C-methyl-D-erythritol 2,4-cyclic diphosphate + reduced [flavodoxin]. It functions in the pathway isoprenoid biosynthesis; isopentenyl diphosphate biosynthesis via DXP pathway; isopentenyl diphosphate from 1-deoxy-D-xylulose 5-phosphate: step 5/6. Converts 2C-methyl-D-erythritol 2,4-cyclodiphosphate (ME-2,4cPP) into 1-hydroxy-2-methyl-2-(E)-butenyl 4-diphosphate. The protein is 4-hydroxy-3-methylbut-2-en-1-yl diphosphate synthase (flavodoxin) of Lawsonia intracellularis (strain PHE/MN1-00).